A 709-amino-acid polypeptide reads, in one-letter code: UV-stimulated scaffold protein A (709 aa).

The segment covering 1-10 has biased composition (basic and acidic residues); the sequence is MDQKLSKLVE. Residues 1–20 form a disordered region; sequence MDQKLSKLVEELTTSGEPRL. Residues 2 to 145 are VHS-like; sequence DQKLSKLVEE…HFLRHNKKVD (144 aa). Residues 165 to 199 adopt a coiled-coil conformation; sequence KHLDKIYQERASQAEREMQEMSGEIESCLTEVESC. Disordered regions lie at residues 230–289 and 386–406; these read SCAG…DSDL and EGGE…EDDE. Residues 280–289 are compositionally biased toward acidic residues; it reads PSDEDEDSDL. 2 positions are modified to phosphoserine: Ser-281 and Ser-287. Positions 386 to 395 are enriched in basic and acidic residues; it reads EGGERRRTEA. Over residues 397–406 the composition is skewed to acidic residues; the sequence is GDAEEDEDDE. Lys-414 participates in a covalent cross-link: Glycyl lysine isopeptide (Lys-Gly) (interchain with G-Cter in ubiquitin). The interval 469–495 is disordered; the sequence is DHLPPPSSASPSRALPEPQEAQKLAAE. A compositionally biased stretch (low complexity) spans 477–486; that stretch reads ASPSRALPEP. The UVSSA-type zinc-finger motif lies at 564-591; the sequence is QHWCRAPRPDGRLCERQDRLKCPFHGKI. Zn(2+) is bound by residues Cys-567, Cys-577, Cys-585, and His-588. A disordered region spans residues 588–655; it reads HGKIVPRDDE…GKGRGKKRRY (68 aa). Positions 592–632 are enriched in basic and acidic residues; it reads VPRDDEGRPLDPEDRAREQRRQLQKQERPEWQDPELMRDVE. The segment covering 646-655 has biased composition (basic residues); that stretch reads GKGRGKKRRY.

Belongs to the UVSSA family. As to quaternary structure, interacts with the elongating form of RNA polymerase II (RNA pol IIo) during transcription stress. Interacts with the TFIIH complex during transcription stress. Interacts with ERCC6. Interacts with ERCC8. Interacts with USP7. Monoubiquitinated at Lys-414 in response to transcription stress; this promotes efficient transfer of TFIIH to stalled RNA polymerase II.

Its subcellular location is the chromosome. Functionally, factor involved in transcription-coupled nucleotide excision repair (TC-NER), a mechanism that rapidly removes RNA polymerase II-blocking lesions from the transcribed strand of active genes. Acts as a key adapter that promotes recruitment of factors involved in TC-NER. Facilitates the ubiquitination of the elongating form of RNA polymerase II (RNA pol IIo) at DNA damage sites, thereby promoting RNA pol IIo backtracking and access by the TC-NER machinery to lesion sites. Also promotes stabilization of ERCC6/CSB by recruiting deubiquitinating enzyme USP7 to TC-NER complexes, preventing UV-induced degradation of ERCC6 by the proteasome. Mediates the recruitment of the TFIIH complex and other factors that are required for nucleotide excision repair to RNA polymerase II. Also required to inactivate stalled RNA polymerase II by blocking the access of TCEA1/TFIIS, thereby preventing reactivation of RNA polymerase II. Not involved in processing oxidative damage. The polypeptide is UV-stimulated scaffold protein A (Homo sapiens (Human)).